Consider the following 438-residue polypeptide: Trigger factor (438 aa).

The PPIase FKBP-type domain occupies 160–231; it reads SDQVTIEEQG…IMDVKTKQLQ (72 aa). Positions 407 to 438 are disordered; that stretch reads AQLSGPQAETVAADQGEQQAEGQEESAEKSEE. A compositionally biased stretch (low complexity) spans 418–427; it reads AADQGEQQAE.

This sequence belongs to the FKBP-type PPIase family. Tig subfamily.

Its subcellular location is the cytoplasm. The enzyme catalyses [protein]-peptidylproline (omega=180) = [protein]-peptidylproline (omega=0). Its function is as follows. Involved in protein export. Acts as a chaperone by maintaining the newly synthesized protein in an open conformation. Functions as a peptidyl-prolyl cis-trans isomerase. This is Trigger factor from Deinococcus deserti (strain DSM 17065 / CIP 109153 / LMG 22923 / VCD115).